The sequence spans 287 residues: Lipoyl synthase (287 aa).

[4Fe-4S] cluster-binding residues include Cys-38, Cys-43, Cys-49, Cys-64, Cys-68, Cys-71, and Ser-277. Residues Trp-50–Arg-266 form the Radical SAM core domain.

It belongs to the radical SAM superfamily. Lipoyl synthase family. Requires [4Fe-4S] cluster as cofactor.

Its subcellular location is the cytoplasm. It catalyses the reaction [[Fe-S] cluster scaffold protein carrying a second [4Fe-4S](2+) cluster] + N(6)-octanoyl-L-lysyl-[protein] + 2 oxidized [2Fe-2S]-[ferredoxin] + 2 S-adenosyl-L-methionine + 4 H(+) = [[Fe-S] cluster scaffold protein] + N(6)-[(R)-dihydrolipoyl]-L-lysyl-[protein] + 4 Fe(3+) + 2 hydrogen sulfide + 2 5'-deoxyadenosine + 2 L-methionine + 2 reduced [2Fe-2S]-[ferredoxin]. It participates in protein modification; protein lipoylation via endogenous pathway; protein N(6)-(lipoyl)lysine from octanoyl-[acyl-carrier-protein]: step 2/2. Catalyzes the radical-mediated insertion of two sulfur atoms into the C-6 and C-8 positions of the octanoyl moiety bound to the lipoyl domains of lipoate-dependent enzymes, thereby converting the octanoylated domains into lipoylated derivatives. In Chlorobium phaeobacteroides (strain DSM 266 / SMG 266 / 2430), this protein is Lipoyl synthase.